The sequence spans 159 residues: UPF0336 protein ML1910 (159 aa).

Belongs to the UPF0336 family.

The sequence is that of UPF0336 protein ML1910 from Mycobacterium leprae (strain TN).